The primary structure comprises 707 residues: Phosphoprotein (707 aa).

Residues 1–35 (MDKLDLVNDGLDIIDFIQKNQKEIQKTYGRSSIQQ) form an N0 binding region. Disordered regions lie at residues 26–103 (KTYG…EDPD), 193–229 (FVPKNQSTPTEEPPVIPEYYYGSGRRGDLSKSPPRGN), 254–446 (FAKS…AENV), and 454–473 (VTRNEGHDQEVTSNEDSLDD). Composition is skewed to polar residues over residues 28–37 (YGRSSIQQPS) and 77–96 (DLSSVTSSDGTIGQRVSNTR). Phosphoserine; by host is present on S257. Residues 296–317 (FPEKEETPDVRRKDSLMQDSCK) are compositionally biased toward basic and acidic residues. At S350 the chain carries Phosphoserine; by host. Polar residues predominate over residues 435 to 446 (NQESKSVTAENV). Residues 473 to 578 (DKYIMPSDDF…LVSMMIMIPG (106 aa)) form a multimerization region.

In terms of assembly, homotetramer. Interacts (via multimerization domain) with polymerase L; this interaction forms the polymerase L-P complex. Interacts (via N-terminus) with N0 (via Ncore); this interaction allows P to chaperon N0 to avoid N polymerization before encapsidation. Interacts (via C-terminus) with N-RNA template; this interaction positions the polymerase on the template for both transcription and replication.

Its function is as follows. Essential cofactor of the RNA polymerase L that plays a central role in the transcription and replication by forming the polymerase complex with RNA polymerase L and recruiting L to the genomic N-RNA template for RNA synthesis. Also plays a central role in the encapsidation of nascent RNA chains by forming the encapsidation complex with the nucleocapsid protein N (N-P complex). Acts as a chaperone for newly synthesized free N protein, so-called N0, allowing encapsidation of nascent RNA chains during replication. The nucleoprotein protein N prevents excessive phosphorylation of P, which leads to down-regulation of viral transcription/ replication. Participates, together with N, in the formation of viral factories (viroplasms), which are large inclusions in the host cytoplasm where replication takes place. The polypeptide is Phosphoprotein (P/V/C) (Equus caballus (Horse)).